A 144-amino-acid polypeptide reads, in one-letter code: Transcription antitermination protein NusB (144 aa).

The protein belongs to the NusB family.

In terms of biological role, involved in transcription antitermination. Required for transcription of ribosomal RNA (rRNA) genes. Binds specifically to the boxA antiterminator sequence of the ribosomal RNA (rrn) operons. This chain is Transcription antitermination protein NusB, found in Pelotomaculum thermopropionicum (strain DSM 13744 / JCM 10971 / SI).